Consider the following 180-residue polypeptide: 3-deoxy-D-manno-octulosonate 8-phosphate phosphatase KdsC (180 aa).

Positions 14 and 16 each coordinate Mg(2+). Substrate contacts are provided by residues aspartate 16, 37 to 41 (HVRDG), lysine 45, arginine 60, arginine 68, and lysine 84. Aspartate 107 is a Mg(2+) binding site.

It belongs to the KdsC family. As to quaternary structure, homotetramer. Mg(2+) is required as a cofactor.

The enzyme catalyses 3-deoxy-alpha-D-manno-2-octulosonate-8-phosphate + H2O = 3-deoxy-alpha-D-manno-oct-2-ulosonate + phosphate. Its function is as follows. Catalyzes the hydrolysis of 3-deoxy-D-manno-octulosonate 8-phosphate (KDO 8-P) to 3-deoxy-D-manno-octulosonate (KDO) and inorganic phosphate. The polypeptide is 3-deoxy-D-manno-octulosonate 8-phosphate phosphatase KdsC (Haemophilus influenzae (strain ATCC 51907 / DSM 11121 / KW20 / Rd)).